The chain runs to 476 residues: Fatty acid hydroperoxide lyase, chloroplastic (476 aa).

Residues 280–300 (LLFILGFNAFGGFSIFLPTLL) form a helical membrane-spanning segment. Cys438 is a heme binding site.

It belongs to the cytochrome P450 family. Heme serves as cofactor. Highly expressed in developing flowers and in young leaves. Detected in stems and immature green fruits, but not in mature green and red fruits.

Its subcellular location is the plastid. It localises to the chloroplast outer membrane. Reversibly inhibited by nordihydroguaiaretic acid (NDGA) and irreversibly by salicylic acid. Its function is as follows. Cytochrome P450 of the CYP74B subfamily involved in the biosynthesis of traumatin and C6 aldehydes. Metabolizes 13- but not 9-hydroperoxides of linoleic and linolenic acids. Can use 15S-hydroperoxy-11(Z),13(E),17(Z)-eicosatrienoic acid (15-HPET) and 13S-hydroperoxy-9(Z),11(E),15(Z)-octadecatrienoic acid (13-HPOT) as substrates, but only 5% activity with 13S-hydroperoxy-9(Z),11(E)-octadecadienoic acid (13-HPOD). Produces n-hexanal and 12-oxo-9(Z)-dodecanoic acid from 13-HPOD. In Solanum lycopersicum (Tomato), this protein is Fatty acid hydroperoxide lyase, chloroplastic.